The sequence spans 456 residues: Pantothenate kinase 2, mitochondrial (456 aa).

The tract at residues 16-89 (AGRFGAPMER…TSAGRPRAEG (74 aa)) is disordered. Composition is skewed to low complexity over residues 28-39 (RAAATSAAVGES) and 55-65 (SSAAPSGSGEA). Ser55, Ser56, and Ser75 each carry phosphoserine. A Nuclear export signal motif is present at residues 154–161 (LELKDLTL). The Proton acceptor role is filled by Glu224. Acetyl-CoA contacts are provided by Ser278, Ser281, and Arg293.

The protein belongs to the type II pantothenate kinase family. As to quaternary structure, homodimer.

The protein resides in the cytoplasm. It localises to the cytosol. It catalyses the reaction (R)-pantothenate + ATP = (R)-4'-phosphopantothenate + ADP + H(+). The protein operates within cofactor biosynthesis; coenzyme A biosynthesis; CoA from (R)-pantothenate: step 1/5. Inhibited by acetyl-CoA. Inhibited by calcium hopantenate. Activated by palmitoylcarnitine. In terms of biological role, catalyzes the phosphorylation of pantothenate to generate 4'-phosphopantothenate in the first and rate-determining step of coenzyme A (CoA) synthesis. The polypeptide is Pantothenate kinase 2, mitochondrial (Pank2) (Mus musculus (Mouse)).